The following is a 247-amino-acid chain: Capsid protein (247 aa).

The Bipartite nuclear localization signal signature appears at 3 to 20 (KRDAPWRLMAGTSKVSRS). The Nuclear localization signal motif lies at 31 to 45 (KRDAWVNRPMYRKPR). A Nuclear export signal motif is present at residues 92-113 (ITHRVGKRFCVKSVYILGKIWM). A Bipartite nuclear localization signal motif is present at residues 191–238 (RRFWKVNNNVVYNHQEAGKYENHTENALLLYMACTHASNPVYATLKIR).

This sequence belongs to the geminiviridae capsid protein family. In terms of assembly, homomultimer. Binds to single-stranded and double-stranded viral DNA. Interacts (via nuclear localization signals) with host importin alpha-1a.

It localises to the virion. The protein localises to the host nucleus. Encapsidates the viral DNA into characteristic twinned ('geminate') particles. Binds the genomic viral ssDNA and shuttles it into and out of the cell nucleus. The CP of bipartite geminiviruses is not required for cell-to-cell or systemic movement. In Solanum lycopersicum (Tomato), this protein is Capsid protein.